We begin with the raw amino-acid sequence, 177 residues long: Large ribosomal subunit protein uL10 (177 aa).

It belongs to the universal ribosomal protein uL10 family. In terms of assembly, part of the ribosomal stalk of the 50S ribosomal subunit. The N-terminus interacts with L11 and the large rRNA to form the base of the stalk. The C-terminus forms an elongated spine to which L12 dimers bind in a sequential fashion forming a multimeric L10(L12)X complex.

Its function is as follows. Forms part of the ribosomal stalk, playing a central role in the interaction of the ribosome with GTP-bound translation factors. This chain is Large ribosomal subunit protein uL10, found in Xanthomonas campestris pv. campestris (strain 8004).